Consider the following 345-residue polypeptide: S-adenosylmethionine:tRNA ribosyltransferase-isomerase (345 aa).

This sequence belongs to the QueA family. As to quaternary structure, monomer.

Its subcellular location is the cytoplasm. The enzyme catalyses 7-aminomethyl-7-carbaguanosine(34) in tRNA + S-adenosyl-L-methionine = epoxyqueuosine(34) in tRNA + adenine + L-methionine + 2 H(+). Its pathway is tRNA modification; tRNA-queuosine biosynthesis. Transfers and isomerizes the ribose moiety from AdoMet to the 7-aminomethyl group of 7-deazaguanine (preQ1-tRNA) to give epoxyqueuosine (oQ-tRNA). In Shewanella pealeana (strain ATCC 700345 / ANG-SQ1), this protein is S-adenosylmethionine:tRNA ribosyltransferase-isomerase.